Reading from the N-terminus, the 279-residue chain is Large ribosomal subunit protein uL2 (279 aa).

A disordered region spans residues 223–279 (TVRGSAMNPNDHPHGGGEGRSPVGMDAPRTPWGKRHMGVKTRNNKKSSTSMIVRRRK). The span at 254-267 (WGKRHMGVKTRNNK) shows a compositional bias: basic residues.

The protein belongs to the universal ribosomal protein uL2 family. In terms of assembly, part of the 50S ribosomal subunit. Forms a bridge to the 30S subunit in the 70S ribosome.

In terms of biological role, one of the primary rRNA binding proteins. Required for association of the 30S and 50S subunits to form the 70S ribosome, for tRNA binding and peptide bond formation. It has been suggested to have peptidyltransferase activity; this is somewhat controversial. Makes several contacts with the 16S rRNA in the 70S ribosome. The polypeptide is Large ribosomal subunit protein uL2 (Ureaplasma urealyticum serovar 10 (strain ATCC 33699 / Western)).